The following is a 442-amino-acid chain: ATP-dependent protease ATPase subunit HslU (442 aa).

ATP contacts are provided by residues isoleucine 18 and 60-65; that span reads GVGKTE. A disordered region spans residues 136-156; the sequence is LPKPKNDWDSTDSDANSNTRQ. Aspartate 255, glutamate 320, and arginine 392 together coordinate ATP.

This sequence belongs to the ClpX chaperone family. HslU subfamily. In terms of assembly, a double ring-shaped homohexamer of HslV is capped on each side by a ring-shaped HslU homohexamer. The assembly of the HslU/HslV complex is dependent on binding of ATP.

The protein localises to the cytoplasm. Its function is as follows. ATPase subunit of a proteasome-like degradation complex; this subunit has chaperone activity. The binding of ATP and its subsequent hydrolysis by HslU are essential for unfolding of protein substrates subsequently hydrolyzed by HslV. HslU recognizes the N-terminal part of its protein substrates and unfolds these before they are guided to HslV for hydrolysis. In Shewanella sp. (strain MR-7), this protein is ATP-dependent protease ATPase subunit HslU.